We begin with the raw amino-acid sequence, 519 residues long: Cilia- and flagella-associated protein 53 (519 aa).

Coiled-coil stretches lie at residues 80–107 (NRHL…LLES) and 210–339 (LAKE…QEEQ). The segment at 498-519 (TTAVHPFRRRDRRCSSSGGQMS) is disordered.

It belongs to the CFAP53 family.

The protein localises to the cytoplasm. It is found in the cytoskeleton. It localises to the cilium axoneme. The protein resides in the cilium basal body. In terms of biological role, microtubule inner protein (MIP) part of the dynein-decorated doublet microtubules (DMTs) in cilia axoneme, which is required for motile cilia beating. Regulates motility patterns of both 9+0 and 9+2 motile cilia through differential localization and recruitment of axonemal dynein components. Required for cilium motility within the spinal canal and Kuppfer's vesicle and is involved in the establishment of left-right symmetry during embryogenesis. This chain is Cilia- and flagella-associated protein 53, found in Danio rerio (Zebrafish).